Here is a 108-residue protein sequence, read N- to C-terminus: MTVQRIFRLSSVLRSAVSVHLRRNIGVTAVAFNKELDPVQKLFLDKIREYKAKRLASGGPVDTGPEYQQEVDRELFKLKQMYGKGEMDKFPTFNFEDPKFEVLDKPQS.

Residues 1–32 constitute a mitochondrion transit peptide; it reads MTVQRIFRLSSVLRSAVSVHLRRNIGVTAVAF. Lys41, Lys46, and Lys79 each carry N6-acetyllysine. Residues Lys84 and Lys99 each carry the N6-acetyllysine; alternate modification. 2 positions are modified to N6-succinyllysine; alternate: Lys84 and Lys99. Residue Lys105 is modified to N6-acetyllysine. Phosphoserine is present on Ser108.

Belongs to the eukaryotic ATPase subunit F6 family. In terms of assembly, component of the ATP synthase complex composed at least of ATP5F1A/subunit alpha, ATP5F1B/subunit beta, ATP5MC1/subunit c (homooctomer), MT-ATP6/subunit a, MT-ATP8/subunit 8, ATP5ME/subunit e, ATP5MF/subunit f, ATP5MG/subunit g, ATP5MK/subunit k, ATP5MJ/subunit j, ATP5F1C/subunit gamma, ATP5F1D/subunit delta, ATP5F1E/subunit epsilon, ATP5PF/subunit F6, ATP5PB/subunit b, ATP5PD/subunit d, ATP5PO/subunit OSCP. ATP synthase complex consists of a soluble F(1) head domain (subunits alpha(3) and beta(3)) - the catalytic core - and a membrane F(0) domain - the membrane proton channel (subunits c, a, 8, e, f, g, k and j). These two domains are linked by a central stalk (subunits gamma, delta, and epsilon) rotating inside the F1 region and a stationary peripheral stalk (subunits F6, b, d, and OSCP).

Its subcellular location is the mitochondrion. It is found in the mitochondrion inner membrane. Subunit F6, of the mitochondrial membrane ATP synthase complex (F(1)F(0) ATP synthase or Complex V) that produces ATP from ADP in the presence of a proton gradient across the membrane which is generated by electron transport complexes of the respiratory chain. ATP synthase complex consist of a soluble F(1) head domain - the catalytic core - and a membrane F(1) domain - the membrane proton channel. These two domains are linked by a central stalk rotating inside the F(1) region and a stationary peripheral stalk. During catalysis, ATP synthesis in the catalytic domain of F(1) is coupled via a rotary mechanism of the central stalk subunits to proton translocation. In vivo, can only synthesize ATP although its ATP hydrolase activity can be activated artificially in vitro. Part of the complex F(0) domain. Part of the complex F(0) domain and the peripheric stalk, which acts as a stator to hold the catalytic alpha(3)beta(3) subcomplex and subunit a/ATP6 static relative to the rotary elements. The protein is ATP synthase peripheral stalk subunit F6, mitochondrial of Rattus norvegicus (Rat).